A 212-amino-acid chain; its full sequence is Protein-L-isoaspartate O-methyltransferase (212 aa).

Ser-60 is an active-site residue.

The protein belongs to the methyltransferase superfamily. L-isoaspartyl/D-aspartyl protein methyltransferase family.

The protein localises to the cytoplasm. The catalysed reaction is [protein]-L-isoaspartate + S-adenosyl-L-methionine = [protein]-L-isoaspartate alpha-methyl ester + S-adenosyl-L-homocysteine. Functionally, catalyzes the methyl esterification of L-isoaspartyl residues in peptides and proteins that result from spontaneous decomposition of normal L-aspartyl and L-asparaginyl residues. It plays a role in the repair and/or degradation of damaged proteins. The protein is Protein-L-isoaspartate O-methyltransferase of Pseudomonas entomophila (strain L48).